A 152-amino-acid polypeptide reads, in one-letter code: Xanthine-guanine phosphoribosyltransferase (152 aa).

Residues R37–G38, R69, and D88–T96 each bind 5-phospho-alpha-D-ribose 1-diphosphate. R69 lines the GMP pocket. D89 contributes to the Mg(2+) binding site. The guanine site is built by D92 and I135. Xanthine is bound by residues D92 and I135. Residues D92–T96 and W134–I135 each bind GMP.

This sequence belongs to the purine/pyrimidine phosphoribosyltransferase family. XGPT subfamily. As to quaternary structure, homotetramer. The cofactor is Mg(2+).

Its subcellular location is the cell inner membrane. It carries out the reaction GMP + diphosphate = guanine + 5-phospho-alpha-D-ribose 1-diphosphate. The catalysed reaction is XMP + diphosphate = xanthine + 5-phospho-alpha-D-ribose 1-diphosphate. The enzyme catalyses IMP + diphosphate = hypoxanthine + 5-phospho-alpha-D-ribose 1-diphosphate. It functions in the pathway purine metabolism; GMP biosynthesis via salvage pathway; GMP from guanine: step 1/1. It participates in purine metabolism; XMP biosynthesis via salvage pathway; XMP from xanthine: step 1/1. Its function is as follows. Purine salvage pathway enzyme that catalyzes the transfer of the ribosyl-5-phosphate group from 5-phospho-alpha-D-ribose 1-diphosphate (PRPP) to the N9 position of the 6-oxopurines guanine and xanthine to form the corresponding ribonucleotides GMP (guanosine 5'-monophosphate) and XMP (xanthosine 5'-monophosphate), with the release of PPi. To a lesser extent, also acts on hypoxanthine. In Salmonella choleraesuis (strain SC-B67), this protein is Xanthine-guanine phosphoribosyltransferase.